Reading from the N-terminus, the 115-residue chain is U3-lycotoxin-Ls1h (115 aa).

The first 20 residues, 1–20 (MKFVLLFGVFLVTLFSYSSA), serve as a signal peptide directing secretion. Positions 21–44 (EMLDDFDQADEDELLSLIEKEEAR) are excised as a propeptide. Cystine bridges form between Cys48-Cys63, Cys55-Cys72, Cys62-Cys87, and Cys74-Cys85.

It belongs to the neurotoxin 19 (CSTX) family. 01 subfamily. As to expression, expressed by the venom gland.

Its subcellular location is the secreted. In Lycosa singoriensis (Wolf spider), this protein is U3-lycotoxin-Ls1h.